Here is a 144-residue protein sequence, read N- to C-terminus: Maximins 3/H14 (144 aa).

A signal peptide spans 1–18 (MNFKYIVAVSFLIASAYA). 2 propeptides span residues 19 to 43 (RSVQNDEQSLSQRDVLEEESLREIR) and 73 to 122 (RTAE…KKEK). Ile143 bears the Isoleucine amide mark.

It belongs to the bombinin family. In terms of tissue distribution, expressed by the skin glands.

It localises to the secreted. In terms of biological role, maximin-3 shows antibacterial activity against both Gram-positive and Gram-negative bacteria. It also shows antimicrobial activity against the fungus C.albicans, but not against A.flavus nor P.uticale. It has little hemolytic activity. It possess a significant cytotoxicity against tumor cell lines. It possess a significant anti-HIV activity. It shows high spermicidal activity. Functionally, maximin-H14 shows antimicrobial activity against bacteria and against the fungus C.albicans. Shows strong hemolytic activity. This Bombina maxima (Giant fire-bellied toad) protein is Maximins 3/H14.